Consider the following 318-residue polypeptide: Methionyl-tRNA formyltransferase (318 aa).

112–115 provides a ligand contact to (6S)-5,6,7,8-tetrahydrofolate; it reads SLLP.

The protein belongs to the Fmt family.

It catalyses the reaction L-methionyl-tRNA(fMet) + (6R)-10-formyltetrahydrofolate = N-formyl-L-methionyl-tRNA(fMet) + (6S)-5,6,7,8-tetrahydrofolate + H(+). Attaches a formyl group to the free amino group of methionyl-tRNA(fMet). The formyl group appears to play a dual role in the initiator identity of N-formylmethionyl-tRNA by promoting its recognition by IF2 and preventing the misappropriation of this tRNA by the elongation apparatus. In Mycobacterium leprae (strain Br4923), this protein is Methionyl-tRNA formyltransferase.